A 77-amino-acid polypeptide reads, in one-letter code: Surfactant-associated protein 2 (77 aa).

An N-terminal signal peptide occupies residues 1 to 19; sequence MESLMRLFLLLALLSSSHA. Asn61 carries an N-linked (GlcNAc...) asparagine glycan.

In terms of processing, N-glycosylated. As to expression, expressed in lung, and specifically in alveolar type II epithelial cells.

It localises to the secreted. Its subcellular location is the cytoplasmic vesicle. The protein resides in the secretory vesicle. The protein localises to the golgi apparatus. Its function is as follows. Putative surfactant protein. The chain is Surfactant-associated protein 2 from Mus musculus (Mouse).